The chain runs to 972 residues: Translation initiation factor IF-2 (972 aa).

Basic and acidic residues predominate over residues H49–K63. 2 disordered regions span residues H49–I86 and D100–A383. The segment covering G105–A114 has biased composition (low complexity). Basic and acidic residues predominate over residues E121–A177. Low complexity predominate over residues K178–Q209. Residues D210–R261 show a composition bias toward basic and acidic residues. A compositionally biased stretch (pro residues) spans P277–P286. Low complexity predominate over residues K298–G327. Gly residues predominate over residues S356–K369. The 170-residue stretch at P472–K641 folds into the tr-type G domain. The segment at G481 to T488 is G1. G481–T488 serves as a coordination point for GTP. The interval G506–H510 is G2. Residues D527–G530 form a G3 region. GTP contacts are provided by residues D527–H531 and N581–D584. The interval N581–D584 is G4. The interval S617–K619 is G5.

This sequence belongs to the TRAFAC class translation factor GTPase superfamily. Classic translation factor GTPase family. IF-2 subfamily.

The protein resides in the cytoplasm. Its function is as follows. One of the essential components for the initiation of protein synthesis. Protects formylmethionyl-tRNA from spontaneous hydrolysis and promotes its binding to the 30S ribosomal subunits. Also involved in the hydrolysis of GTP during the formation of the 70S ribosomal complex. The polypeptide is Translation initiation factor IF-2 (Burkholderia ambifaria (strain MC40-6)).